The chain runs to 455 residues: Nuclear mRNA export protein THP1 (455 aa).

Residues 220–431 (IEYRYLLGRY…QLCVVKKTTM (212 aa)) enclose the PCI domain.

Heterodimer with THP1. The SAC3-THP1 complex interacts with CDC31 and SUS1, and with the mRNA export factor MEX67-MTR2, the TREX complex component SUB2, and the nucleoporin NUP1.

The protein resides in the nucleus envelope. Functionally, component of the SAC3-THP1 complex, which functions in transcription-coupled mRNA export from the nucleus to the cytoplasm. SAC3-THP1 functions in docking export-competent ribonucleoprotein particles (mRNPs) to the nuclear entrance of the nuclear pore complex (nuclear basket), by association with components of the nuclear mRNA export machinery (MEX67-MTR2 and SUB2) in the nucleoplasm and the nucleoporin NUP1 at the nuclear basket. THP1 binds to RNA in vitro. The chain is Nuclear mRNA export protein THP1 (THP1) from Saccharomyces cerevisiae (strain ATCC 204508 / S288c) (Baker's yeast).